Consider the following 291-residue polypeptide: ATP synthase gamma chain (291 aa).

Belongs to the ATPase gamma chain family. In terms of assembly, F-type ATPases have 2 components, CF(1) - the catalytic core - and CF(0) - the membrane proton channel. CF(1) has five subunits: alpha(3), beta(3), gamma(1), delta(1), epsilon(1). CF(0) has three main subunits: a, b and c.

The protein localises to the cell inner membrane. Functionally, produces ATP from ADP in the presence of a proton gradient across the membrane. The gamma chain is believed to be important in regulating ATPase activity and the flow of protons through the CF(0) complex. This chain is ATP synthase gamma chain, found in Burkholderia cenocepacia (strain ATCC BAA-245 / DSM 16553 / LMG 16656 / NCTC 13227 / J2315 / CF5610) (Burkholderia cepacia (strain J2315)).